We begin with the raw amino-acid sequence, 48 residues long: Large ribosomal subunit protein bL33A (48 aa).

This sequence belongs to the bacterial ribosomal protein bL33 family.

The sequence is that of Large ribosomal subunit protein bL33A from Streptococcus pyogenes serotype M28 (strain MGAS6180).